A 240-amino-acid polypeptide reads, in one-letter code: Dihydromonapterin reductase (240 aa).

The active-site Proton acceptor is tyrosine 152.

Belongs to the short-chain dehydrogenases/reductases (SDR) family. FolM subfamily.

It catalyses the reaction (6S)-5,6,7,8-tetrahydrofolate + NADP(+) = 7,8-dihydrofolate + NADPH + H(+). The enzyme catalyses 7,8-dihydromonapterin + NADPH + H(+) = 5,6,7,8-tetrahydromonapterin + NADP(+). Its function is as follows. Catalyzes the reduction of dihydromonapterin to tetrahydromonapterin. Also has lower activity with dihydrofolate. This Escherichia coli O6:K15:H31 (strain 536 / UPEC) protein is Dihydromonapterin reductase (folM).